We begin with the raw amino-acid sequence, 87 residues long: uncharacterized protein (87 aa).

A signal peptide spans Met-1–Ala-23. A disordered region spans residues Asp-24–Asp-44.

Its subcellular location is the secreted. This is an uncharacterized protein from Homo sapiens (Human).